The chain runs to 164 residues: Ecotin (164 aa).

Positions M1–A20 are cleaved as a signal peptide. Cysteines 72 and 109 form a disulfide.

This sequence belongs to the protease inhibitor I11 (ecotin) family. Homodimer.

Its subcellular location is the periplasm. General inhibitor of pancreatic serine proteases: inhibits chymotrypsin, trypsin, elastases, factor X, kallikrein as well as a variety of other proteases. This Salmonella typhi protein is Ecotin.